Here is a 498-residue protein sequence, read N- to C-terminus: Minor fimbrium subunit Mfa1 (498 aa).

A signal peptide spans 1 to 19 (MKLNKMFLVGALLSLGFAS). Residue Cys-20 is the site of N-palmitoyl cysteine attachment. Cys-20 carries the S-diacylglycerol cysteine lipid modification. The propeptide occupies 20–50 (CSKEGNGPAPDSSSTADTHMSVSMSLPQHNR). The disordered stretch occupies residues 436-476 (SGNPFVPTDPDPNNPDTPDNPDTPDPEDPDTPNPEEPLPVQ).

This sequence belongs to the bacteroidetes fimbrillin superfamily. FimA/Mfa1 family. As to quaternary structure, structural component of the fimbrial stalk. Minor fimbriae are composed of a structural subunit, such as the 53 kDa fimbrillin, and the accessory subunits Mfa3, Mfa4 and Mfa5. Fimbrium assembly occurs by linear, head-to-tail oligomerization of fimbrial subunits. This is mediated via insertion of a C-terminal beta-strand from one subunit into a groove in the N-terminal domain of the following subunit.

It is found in the fimbrium. The protein resides in the cell outer membrane. In terms of biological role, structural subunit of the minor fimbriae. These filamentous pili are attached to the cell surface; they mediate biofilm formation, adhesion onto host cells and onto other bacteria that are part of the oral microbiome. They play an important role in invasion of periodontal tissues and are recognized as major virulence factors. Mfa1 orthologs from different strains have highly divergent sequences, and this correlates with pathogenicity. In Porphyromonas gingivalis (Bacteroides gingivalis), this protein is Minor fimbrium subunit Mfa1.